The primary structure comprises 267 residues: Orotidine 5'-phosphate decarboxylase (267 aa).

Substrate contacts are provided by residues Asp-37, 59-61 (KTH), 91-100 (DRKFADIGNT), Tyr-217, and Arg-235. Lys-93 serves as the catalytic Proton donor.

It belongs to the OMP decarboxylase family.

The catalysed reaction is orotidine 5'-phosphate + H(+) = UMP + CO2. It functions in the pathway pyrimidine metabolism; UMP biosynthesis via de novo pathway; UMP from orotate: step 2/2. The polypeptide is Orotidine 5'-phosphate decarboxylase (URA3) (Eremothecium gossypii (strain ATCC 10895 / CBS 109.51 / FGSC 9923 / NRRL Y-1056) (Yeast)).